The sequence spans 215 residues: Pyrrolidone-carboxylate peptidase (215 aa).

Active-site residues include glutamate 80, cysteine 143, and histidine 167.

It belongs to the peptidase C15 family. As to quaternary structure, homotetramer.

The protein resides in the cytoplasm. The catalysed reaction is Release of an N-terminal pyroglutamyl group from a polypeptide, the second amino acid generally not being Pro.. Removes 5-oxoproline from various penultimate amino acid residues except L-proline. The protein is Pyrrolidone-carboxylate peptidase of Pectobacterium atrosepticum (strain SCRI 1043 / ATCC BAA-672) (Erwinia carotovora subsp. atroseptica).